The following is a 181-amino-acid chain: CASP-like protein 1F2 (181 aa).

The Cytoplasmic portion of the chain corresponds to 1-18 (MADIETKSSQNQPLKTQN). Residues 19-39 (IFIGAQIFLRIVVIAASFAST) form a helical membrane-spanning segment. The Extracellular portion of the chain corresponds to 40-70 (WLMLTNKQTIDIGGFVLDANYSYSPEFKFLS). A glycan (N-linked (GlcNAc...) asparagine) is linked at Asn-59. A helical transmembrane segment spans residues 71–91 (YANIVVGAFSFVSLLFLVLVG). The Cytoplasmic segment spans residues 92–100 (RRSSNPTYY). A helical transmembrane segment spans residues 101–121 (FILFLHDLALMSLVLGGCAAA). Residues 122 to 150 (TVIGSLGKYGNSHTGWMQICDHFGKFCKR) are Extracellular-facing. A helical membrane pass occupies residues 151–171 (ATTSVAFSYFSLVCLLILTIT). Residues 172–181 (SASKSRQIQV) are Cytoplasmic-facing.

This sequence belongs to the Casparian strip membrane proteins (CASP) family. Homodimer and heterodimers.

It is found in the cell membrane. The sequence is that of CASP-like protein 1F2 from Populus trichocarpa (Western balsam poplar).